Consider the following 78-residue polypeptide: Large ribosomal subunit protein eL20 (78 aa).

This sequence belongs to the eukaryotic ribosomal protein eL20 family. In terms of assembly, part of the 50S ribosomal subunit. Binds 23S rRNA.

The chain is Large ribosomal subunit protein eL20 from Pyrobaculum neutrophilum (strain DSM 2338 / JCM 9278 / NBRC 100436 / V24Sta) (Thermoproteus neutrophilus).